A 410-amino-acid polypeptide reads, in one-letter code: Sulfate adenylyltransferase (410 aa).

The protein belongs to the sulfate adenylyltransferase family.

It carries out the reaction sulfate + ATP + H(+) = adenosine 5'-phosphosulfate + diphosphate. The protein operates within sulfur metabolism; hydrogen sulfide biosynthesis; sulfite from sulfate: step 1/3. The polypeptide is Sulfate adenylyltransferase (Syntrophobacter fumaroxidans (strain DSM 10017 / MPOB)).